Here is a 189-residue protein sequence, read N- to C-terminus: Tetratricopeptide repeat protein 36 (189 aa).

3 TPR repeats span residues 51–84 (SKAL…LPER), 86–118 (SAYN…SGGR), and 123–156 (RQSF…GSPF).

It belongs to the TTC36 family.

This is Tetratricopeptide repeat protein 36 (TTC36) from Homo sapiens (Human).